Here is a 123-residue protein sequence, read N- to C-terminus: Fluoride-specific ion channel FluC (123 aa).

4 helical membrane passes run 4 to 24, 31 to 51, 64 to 83, and 100 to 120; these read VYIA…SGWV, ALPY…GLLM, IRMG…STFS, and ANIL…IFLA. Positions 74 and 77 each coordinate Na(+).

Belongs to the fluoride channel Fluc/FEX (TC 1.A.43) family.

It localises to the cell inner membrane. The catalysed reaction is fluoride(in) = fluoride(out). With respect to regulation, na(+) is not transported, but it plays an essential structural role and its presence is essential for fluoride channel function. Fluoride-specific ion channel. Important for reducing fluoride concentration in the cell, thus reducing its toxicity. In Syntrophotalea carbinolica (strain DSM 2380 / NBRC 103641 / GraBd1) (Pelobacter carbinolicus), this protein is Fluoride-specific ion channel FluC.